The primary structure comprises 594 residues: MTTGTDVRISLRLLFYELWDNNAKLTKNKTTTPTTSKTTSKILFNSKRTTPTHGYDADYIAELSNNFEFAGFTAPTPHNIRKAFTRLKIMFERMNRYPDEIFLSRHRMLGFVIYQPETSGPIPAFHPKCKFYKLSDNHTHDEKIEIVKNHILNGEIVKTVDLKIDQSFESYYYDKSNAQASQKFLASMHTCDFSFLSFPYINDLTATELGLLPEWAAILLSYMKIINVRGIYNDVVECIDPSQQFCVFEIIGSLTGISNGHFWSVLNDRRSMDVIAKEVEKIALDNQPFXKDGNLNHLLFNSINLSDPLNFNIFHYSFKLKIFPTTLNPLDDLVLLRMKDLIKAFNAGNDVQVIGNKCIGKTRLTAELKKKYLNLLIIDSDDYGKFITLLLNNCPNLFLNNDFEINDEVFEEEIFNVTVIEYANVIRDGTIVIETFFERLMFEIMSLNLTNGEYDVDAIFHSFNARFHAIVNSSMIGYRLFFTKFRKLMFDNFNYTQVLHFVHSYSELSFYPHCVAYITLEPSYNPCCLLYKNRVKRFLSITRSDKGVSSELFLHQFYEKFTTKVNPTPVFVFRYYFGLTNGLSISELALDENT.

The protein resides in the virion. It localises to the host cytoplasm. Its subcellular location is the host cytoskeleton. Functionally, minor inner capsid component. Displays NTPase and RNA 5'-triphosphatase (RTPase) activities. May function as a cofactor of polymerase VP1. Associates with microtubules and plays a role in the formation, structural organization and morphology of viral inclusions, where the assembly of cores and the replication of viral RNA occur. The polypeptide is Microtubule-associated protein VP8 (S8) (Saccharum officinarum (Sugarcane)).